Reading from the N-terminus, the 562-residue chain is Terpene synthase 2 (562 aa).

The Mg(2+) site is built by Asp-315, Asp-319, Asp-459, and Glu-467. The short motif at 315-319 is the DDXXD motif element; it reads DDEYD.

The protein belongs to the terpene synthase family. Tpsa subfamily. Requires Mg(2+) as cofactor. Mn(2+) serves as cofactor. In terms of tissue distribution, expressed at low levels in stems, leaves, roots and fruits.

The catalysed reaction is (2E,6E)-farnesyl diphosphate = delta-cadinene + diphosphate. It carries out the reaction (2E,6E)-farnesyl diphosphate = alpha-cadinene + diphosphate. It catalyses the reaction (2E,6E)-farnesyl diphosphate + H2O = (-)-delta-cadinol + diphosphate. It functions in the pathway secondary metabolite biosynthesis; terpenoid biosynthesis. Its function is as follows. Sesquiterpene synthase involved in the biosynthesis of volatile compounds that contribute to the characteristic flavors of black pepper. Mediates the conversion of (2E,6E)-farnesyl diphosphate (FPP) into alpha-cadinene, delta-cadinene and delta-cadinol. The protein is Terpene synthase 2 of Piper nigrum (Black pepper).